An 82-amino-acid polypeptide reads, in one-letter code: Large ribosomal subunit protein bL28 (82 aa).

The interval 1–25 is disordered; that stretch reads MAKVDQITKKRAMTGNTRSHALNHS.

It belongs to the bacterial ribosomal protein bL28 family.

In Malacoplasma penetrans (strain HF-2) (Mycoplasma penetrans), this protein is Large ribosomal subunit protein bL28.